A 157-amino-acid chain; its full sequence is Transcription elongation factor GreA (157 aa).

The protein belongs to the GreA/GreB family.

In terms of biological role, necessary for efficient RNA polymerase transcription elongation past template-encoded arresting sites. The arresting sites in DNA have the property of trapping a certain fraction of elongating RNA polymerases that pass through, resulting in locked ternary complexes. Cleavage of the nascent transcript by cleavage factors such as GreA or GreB allows the resumption of elongation from the new 3'terminus. GreA releases sequences of 2 to 3 nucleotides. The chain is Transcription elongation factor GreA from Brucella anthropi (strain ATCC 49188 / DSM 6882 / CCUG 24695 / JCM 21032 / LMG 3331 / NBRC 15819 / NCTC 12168 / Alc 37) (Ochrobactrum anthropi).